The primary structure comprises 520 residues: 2-isopropylmalate synthase (520 aa).

In terms of domain architecture, Pyruvate carboxyltransferase spans 12–274 (IRIFDTTLRD…DTAINTPRIV (263 aa)). The Mn(2+) site is built by D21, H209, H211, and N245. The regulatory domain stretch occupies residues 396–520 (RLASMTISDV…VVAGKTAAVA (125 aa)).

It belongs to the alpha-IPM synthase/homocitrate synthase family. LeuA type 1 subfamily. As to quaternary structure, homodimer. The cofactor is Mn(2+).

Its subcellular location is the cytoplasm. It catalyses the reaction 3-methyl-2-oxobutanoate + acetyl-CoA + H2O = (2S)-2-isopropylmalate + CoA + H(+). Its pathway is amino-acid biosynthesis; L-leucine biosynthesis; L-leucine from 3-methyl-2-oxobutanoate: step 1/4. In terms of biological role, catalyzes the condensation of the acetyl group of acetyl-CoA with 3-methyl-2-oxobutanoate (2-ketoisovalerate) to form 3-carboxy-3-hydroxy-4-methylpentanoate (2-isopropylmalate). This Xanthomonas campestris pv. campestris (strain B100) protein is 2-isopropylmalate synthase.